Consider the following 328-residue polypeptide: tRNA uridine(34) hydroxylase (328 aa).

The Rhodanese domain maps to 130–224 (LDEDTVVLDT…YGKDPEVQGE (95 aa)). Cys184 serves as the catalytic Cysteine persulfide intermediate.

It belongs to the TrhO family.

The enzyme catalyses uridine(34) in tRNA + AH2 + O2 = 5-hydroxyuridine(34) in tRNA + A + H2O. In terms of biological role, catalyzes oxygen-dependent 5-hydroxyuridine (ho5U) modification at position 34 in tRNAs. In Streptococcus pyogenes serotype M12 (strain MGAS2096), this protein is tRNA uridine(34) hydroxylase.